A 387-amino-acid chain; its full sequence is Early growth response protein 3 (387 aa).

A disordered region spans residues 241 to 283 (PGFGSLPQPPLTLKPIRPRKYPNRPSKTPLHERPHACPAEGCD). Over residues 269 to 283 (PLHERPHACPAEGCD) the composition is skewed to basic and acidic residues. 3 consecutive C2H2-type zinc fingers follow at residues 275–299 (HACP…LRIH), 305–327 (FQCR…IRTH), and 333–355 (FACE…AKIH). The interval 348 to 387 (RKRHAKIHLKQKEKKAEKGGAPSASSAPPVSLAPVVTTCA) is disordered. The span at 350 to 360 (RHAKIHLKQKE) shows a compositional bias: basic residues. The span at 368–387 (APSASSAPPVSLAPVVTTCA) shows a compositional bias: low complexity.

This sequence belongs to the EGR C2H2-type zinc-finger protein family.

The protein resides in the nucleus. Probable transcription factor involved in muscle spindle development. This Homo sapiens (Human) protein is Early growth response protein 3 (EGR3).